A 364-amino-acid chain; its full sequence is Probable dual-specificity RNA methyltransferase RlmN (364 aa).

Glu106 acts as the Proton acceptor in catalysis. The Radical SAM core domain maps to 112 to 351 (YPHRNTVCIS…CTVRDTRGRE (240 aa)). A disulfide bridge links Cys119 with Cys356. Residues Cys126, Cys130, and Cys133 each contribute to the [4Fe-4S] cluster site. S-adenosyl-L-methionine is bound by residues 177–178 (GE), Ser211, 234–236 (SLH), and Asn313. The active-site S-methylcysteine intermediate is Cys356.

It belongs to the radical SAM superfamily. RlmN family. It depends on [4Fe-4S] cluster as a cofactor.

The protein resides in the cytoplasm. The enzyme catalyses adenosine(2503) in 23S rRNA + 2 reduced [2Fe-2S]-[ferredoxin] + 2 S-adenosyl-L-methionine = 2-methyladenosine(2503) in 23S rRNA + 5'-deoxyadenosine + L-methionine + 2 oxidized [2Fe-2S]-[ferredoxin] + S-adenosyl-L-homocysteine. It catalyses the reaction adenosine(37) in tRNA + 2 reduced [2Fe-2S]-[ferredoxin] + 2 S-adenosyl-L-methionine = 2-methyladenosine(37) in tRNA + 5'-deoxyadenosine + L-methionine + 2 oxidized [2Fe-2S]-[ferredoxin] + S-adenosyl-L-homocysteine. Its function is as follows. Specifically methylates position 2 of adenine 2503 in 23S rRNA and position 2 of adenine 37 in tRNAs. This Mycolicibacterium paratuberculosis (strain ATCC BAA-968 / K-10) (Mycobacterium paratuberculosis) protein is Probable dual-specificity RNA methyltransferase RlmN.